The chain runs to 109 residues: Aquaporin-2 (109 aa).

The Cytoplasmic portion of the chain corresponds to 1-6; it reads SIAFSR. Residues 7–27 traverse the membrane as a helical segment; sequence AVLSEFLATLLFVFFGLGSAL. Residues 28–35 lie on the Extracellular side of the membrane; that stretch reads NWPQALPS. Residues 36 to 54 traverse the membrane as a helical segment; the sequence is VLQIAMAFGLAIGTLVQTL. Over 55–59 the chain is Cytoplasmic; sequence GHISG. The segment at residues 60-69 is an intramembrane region (discontinuously helical); the sequence is AHINPAVTIA. Residues 63–65 carry the NPA 1 motif; it reads NPA. At 70-80 the chain is on the cytoplasmic side; sequence CLVGCHVSFLR. Residues 81 to 102 traverse the membrane as a helical segment; that stretch reads ALFYLAAQLLGAVAGAALLHEL. The Extracellular portion of the chain corresponds to 103 to 109; that stretch reads TPPDIRG.

It belongs to the MIP/aquaporin (TC 1.A.8) family. Homotetramer. Serine phosphorylation is necessary and sufficient for expression at the apical membrane. Endocytosis is not phosphorylation-dependent. Post-translationally, N-glycosylated.

Its subcellular location is the apical cell membrane. The protein resides in the basolateral cell membrane. It localises to the cell membrane. It is found in the cytoplasmic vesicle membrane. The protein localises to the golgi apparatus. Its subcellular location is the trans-Golgi network membrane. It catalyses the reaction H2O(in) = H2O(out). The catalysed reaction is glycerol(in) = glycerol(out). Functionally, forms a water-specific channel that provides the plasma membranes of renal collecting duct with high permeability to water, thereby permitting water to move in the direction of an osmotic gradient. Plays an essential role in renal water homeostasis. Could also be permeable to glycerol. This chain is Aquaporin-2, found in Procavia capensis habessinica (Abyssinian hyrax).